Reading from the N-terminus, the 322-residue chain is Ribose-phosphate pyrophosphokinase 1 (322 aa).

Residues 39-41 (DGE) and 98-99 (RQ) contribute to the ATP site. Mg(2+) is bound by residues His-132 and Asp-173. Lys-196 is a catalytic residue. D-ribose 5-phosphate contacts are provided by residues Arg-198, Asp-224, and 228–232 (DTAGT).

This sequence belongs to the ribose-phosphate pyrophosphokinase family. Class I subfamily. As to quaternary structure, homohexamer. Mg(2+) serves as cofactor.

Its subcellular location is the cytoplasm. The enzyme catalyses D-ribose 5-phosphate + ATP = 5-phospho-alpha-D-ribose 1-diphosphate + AMP + H(+). Its pathway is metabolic intermediate biosynthesis; 5-phospho-alpha-D-ribose 1-diphosphate biosynthesis; 5-phospho-alpha-D-ribose 1-diphosphate from D-ribose 5-phosphate (route I): step 1/1. Its function is as follows. Involved in the biosynthesis of the central metabolite phospho-alpha-D-ribosyl-1-pyrophosphate (PRPP) via the transfer of pyrophosphoryl group from ATP to 1-hydroxyl of ribose-5-phosphate (Rib-5-P). The protein is Ribose-phosphate pyrophosphokinase 1 of Streptococcus pneumoniae serotype 4 (strain ATCC BAA-334 / TIGR4).